The sequence spans 480 residues: MIHNVEKTKLEYGDFQTPLELAEKVCEKLVQLGVNPDIIVEPTCGLGNFIEAASYSFTRAKKIFGIEINSNYLDKIKEKQIFLNDEKFDIRCGDFFQVDWSSIIGQLNKEILIIGNLPWVTNSQQGSIDGENLPIKNNFQNYHGLDAITGKSNFDISEWMLIRLVQCLQKHNGYLAMLCKTSVSRKILNYIHSQKLNLAYSATYKIDTRKYFRVNVDACLFLCKFDLISKNYFCDIFDNIETSKYYRIGYHNNVLIKDLVALKRLKNLYTNKSNIKWRSGIKHDCASVMELQKINDTFINGLGEIVDIEETYLFPLIKGSYVAQNKINATDRYILVTQKIIGEPTDNIRDLAPKTWQYLEKHEKLLDTRKSKIYQNKPRFSIFGVGSYSFSPWKIAICGLYKKLEFRLIGKISEKPTIFDDTVYFLSFEDEEIAFKTVALLNSSLARDFYSSLVFWDEKRPIKSSILNSLDLEVLAKVIL.

It belongs to the methyltransferase superfamily.

A gamma subtype methylase that recognizes the double-stranded sequence 5'-TTCGAA-3', and methylates it on an unknown base to protect it against the NspV endonuclease. This chain is Type II methyltransferase M.NspV, found in Nostoc sp. (strain ATCC 29411 / PCC 7524).